The chain runs to 856 residues: Leucine--tRNA ligase (856 aa).

The short motif at 53-63 (PYPSGNLHMGH) is the 'HIGH' region element. A 'KMSKS' region motif is present at residues 622–626 (KMSKS). K625 is a binding site for ATP.

It belongs to the class-I aminoacyl-tRNA synthetase family.

It is found in the cytoplasm. The catalysed reaction is tRNA(Leu) + L-leucine + ATP = L-leucyl-tRNA(Leu) + AMP + diphosphate. This Prochlorococcus marinus (strain MIT 9301) protein is Leucine--tRNA ligase.